The sequence spans 139 residues: Deoxyuridine 5'-triphosphate nucleotidohydrolase (139 aa).

Substrate is bound by residues 58–60 (RSG), Asn71, 75–77 (LID), and Met85.

The protein belongs to the dUTPase family. The cofactor is Mg(2+).

The catalysed reaction is dUTP + H2O = dUMP + diphosphate + H(+). Its pathway is pyrimidine metabolism; dUMP biosynthesis; dUMP from dCTP (dUTP route): step 2/2. Its function is as follows. This enzyme is involved in nucleotide metabolism: it produces dUMP, the immediate precursor of thymidine nucleotides and it decreases the intracellular concentration of dUTP so that uracil cannot be incorporated into DNA. This is Deoxyuridine 5'-triphosphate nucleotidohydrolase from Gamma-proteobacterium EBAC31A08.